The primary structure comprises 72 residues: Translation initiation factor IF-1 (72 aa).

An S1-like domain is found at Met-1 to Lys-72.

Belongs to the IF-1 family. Component of the 30S ribosomal translation pre-initiation complex which assembles on the 30S ribosome in the order IF-2 and IF-3, IF-1 and N-formylmethionyl-tRNA(fMet); mRNA recruitment can occur at any time during PIC assembly.

It is found in the cytoplasm. Functionally, one of the essential components for the initiation of protein synthesis. Stabilizes the binding of IF-2 and IF-3 on the 30S subunit to which N-formylmethionyl-tRNA(fMet) subsequently binds. Helps modulate mRNA selection, yielding the 30S pre-initiation complex (PIC). Upon addition of the 50S ribosomal subunit IF-1, IF-2 and IF-3 are released leaving the mature 70S translation initiation complex. This Clostridioides difficile (strain 630) (Peptoclostridium difficile) protein is Translation initiation factor IF-1.